The chain runs to 520 residues: Arabinose import ATP-binding protein AraG (520 aa).

Residues 1–10 (MTTQTMTAVS) are compositionally biased toward polar residues. The segment at 1–27 (MTTQTMTAVSGNDGDTGGDAAESPPGG) is disordered. 2 ABC transporter domains span residues 30-265 (LALD…MVGR) and 265-516 (RSIE…LIKL). 62-69 (GENGAGKS) lines the ATP pocket.

It belongs to the ABC transporter superfamily. Arabinose importer (TC 3.A.1.2.2) family. The complex is composed of two ATP-binding proteins (AraG), two transmembrane proteins (AraH) and a solute-binding protein (AraF).

It is found in the cell inner membrane. It catalyses the reaction L-arabinose(out) + ATP + H2O = L-arabinose(in) + ADP + phosphate + H(+). Its function is as follows. Part of the ABC transporter complex AraFGH involved in L-arabinose import. Responsible for energy coupling to the transport system. In Azospirillum brasilense, this protein is Arabinose import ATP-binding protein AraG.